Here is a 456-residue protein sequence, read N- to C-terminus: Exodeoxyribonuclease 7 large subunit (456 aa).

This sequence belongs to the XseA family. In terms of assembly, heterooligomer composed of large and small subunits.

It localises to the cytoplasm. It carries out the reaction Exonucleolytic cleavage in either 5'- to 3'- or 3'- to 5'-direction to yield nucleoside 5'-phosphates.. In terms of biological role, bidirectionally degrades single-stranded DNA into large acid-insoluble oligonucleotides, which are then degraded further into small acid-soluble oligonucleotides. The polypeptide is Exodeoxyribonuclease 7 large subunit (Escherichia coli (strain SE11)).